Consider the following 330-residue polypeptide: Membrane progestin receptor gamma (330 aa).

Residues 1–51 (MLSLKLPRLFRIDQVPQVFHEQGILFGYRHPQSSATACILSLFQMTNETLN) are Cytoplasmic-facing. The chain crosses the membrane as a helical span at residues 52–72 (IWTHLLPFWFFVWRFMTALYV). The Extracellular segment spans residues 73-81 (TDIQNDSYS). A helical transmembrane segment spans residues 82 to 101 (WPMLVYMCTSCVYPLASSCA). The Cytoplasmic segment spans residues 102-113 (HTFSSMSKNARH). A helical transmembrane segment spans residues 114–134 (ICYFLDYGAVNLFSLGSAIAY). At 135–141 (SAYTFPD) the chain is on the extracellular side. Residues 142–162 (ALVCSTFHECYVALAVLNTIL) form a helical membrane-spanning segment. Topologically, residues 163–186 (STGLSCYSRFLELQKPRLCKLLRV) are cytoplasmic. A helical membrane pass occupies residues 187-207 (LAFAYPYTWDSLPIFYRLFLF). At 208 to 253 (PGESSRNEAMLYHQKHMGMTLLASFFYSAHLPERLAPGRFDYIGHS) the chain is on the extracellular side. Residues 254–274 (HQLFHVCVILATHLQMEAILL) traverse the membrane as a helical segment. The Cytoplasmic segment spans residues 275–294 (DKTLRREWLLATSRPFSFPQ). A helical membrane pass occupies residues 295–315 (IAAAMLLCIIFSLSNIIYFSA). The Extracellular portion of the chain corresponds to 316-330 (ALYRIPEPELHEKET).

It belongs to the ADIPOR family.

It is found in the cell membrane. Plasma membrane progesterone (P4) receptor coupled to G proteins. Seems to act through a G(i) mediated pathway. May be involved in oocyte maturation. The protein is Membrane progestin receptor gamma of Mus musculus (Mouse).